The primary structure comprises 564 residues: Cytochrome P450 monooxygenase fsdH (564 aa).

Residues 18 to 38 form a helical membrane-spanning segment; it reads GSVSLAVLSTLAVVIAGWYIL. Cys472 lines the heme pocket.

It belongs to the cytochrome P450 family. Requires heme as cofactor.

Its subcellular location is the membrane. It functions in the pathway mycotoxin biosynthesis. In terms of biological role, cytochrome P450 monooxygenase; part of the gene cluster that mediates the biosynthesis of fusaridione A, a bright yellow trans-fused decalin-containing tetramic acid with antimicrobial activity. The PKS module of fsdS catalyzes the formation of the polyketide unit which is then conjugated to L-tyrosine by the condensation domain of the fsdS NRPS module. Activity of the Dieckmann cyclase domain (RED) results in release of the intermediate fusaridione A. The unstable pyrrolidinedione ring of fusaridione A is opened through a reverse-Dieckmann reaction to afford its ring-opened form. The polypeptide is Cytochrome P450 monooxygenase fsdH (Fusarium heterosporum).